The sequence spans 378 residues: Ribosomal RNA large subunit methyltransferase G (378 aa).

This sequence belongs to the methyltransferase superfamily. RlmG family.

Its subcellular location is the cytoplasm. It carries out the reaction guanosine(1835) in 23S rRNA + S-adenosyl-L-methionine = N(2)-methylguanosine(1835) in 23S rRNA + S-adenosyl-L-homocysteine + H(+). Functionally, specifically methylates the guanine in position 1835 (m2G1835) of 23S rRNA. The polypeptide is Ribosomal RNA large subunit methyltransferase G (Escherichia coli O6:K15:H31 (strain 536 / UPEC)).